Here is a 539-residue protein sequence, read N- to C-terminus: Membrane protein insertase YidC (539 aa).

Residues 7-27 (IIAIALSFVVLVGWSYLADHM) form a helical membrane-spanning segment. The segment at 32–64 (QPAPQAQQEETAPSASQAAPQSASQAAAPAPRA) is disordered. 3 consecutive transmembrane segments (helical) span residues 347–367 (YVGN…LVFW), 418–438 (GGCL…QALL), and 498–518 (IMMF…SGLV).

It belongs to the OXA1/ALB3/YidC family. Type 1 subfamily. Interacts with the Sec translocase complex via SecD. Specifically interacts with transmembrane segments of nascent integral membrane proteins during membrane integration.

It is found in the cell inner membrane. Required for the insertion and/or proper folding and/or complex formation of integral membrane proteins into the membrane. Involved in integration of membrane proteins that insert both dependently and independently of the Sec translocase complex, as well as at least some lipoproteins. Aids folding of multispanning membrane proteins. The protein is Membrane protein insertase YidC of Nitratidesulfovibrio vulgaris (strain DSM 19637 / Miyazaki F) (Desulfovibrio vulgaris).